We begin with the raw amino-acid sequence, 373 residues long: WAT1-related protein At4g08300 (373 aa).

The next 10 membrane-spanning stretches (helical) occupy residues P11–V31, I41–L61, P67–L87, T102–F122, I139–I159, W185–L205, L219–V239, A255–I275, V281–V301, and I306–W326. 2 EamA domains span residues A23–M151 and T198–V325.

This sequence belongs to the drug/metabolite transporter (DMT) superfamily. Plant drug/metabolite exporter (P-DME) (TC 2.A.7.4) family.

It localises to the membrane. This chain is WAT1-related protein At4g08300, found in Arabidopsis thaliana (Mouse-ear cress).